Consider the following 405-residue polypeptide: L-rhamnonate dehydratase (405 aa).

H33 and R59 together coordinate substrate. Residues D226, E252, and E280 each contribute to the Mg(2+) site. H329 functions as the Proton acceptor in the catalytic mechanism. E349 lines the substrate pocket.

The protein belongs to the mandelate racemase/muconate lactonizing enzyme family. RhamD subfamily. Homooctamer; tetramer of dimers. Mg(2+) serves as cofactor.

It catalyses the reaction L-rhamnonate = 2-dehydro-3-deoxy-L-rhamnonate + H2O. Functionally, catalyzes the dehydration of L-rhamnonate to 2-keto-3-deoxy-L-rhamnonate (KDR). The protein is L-rhamnonate dehydratase of Escherichia coli (strain K12 / DH10B).